An 888-amino-acid chain; its full sequence is Probable disease resistance protein At5g63020 (888 aa).

A coiled-coil region spans residues 22-66; that stretch reads LNRNGDYIHGLEENLTALQRALEQIEQRREDLLRKILSEERRGLQ. In terms of domain architecture, NB-ARC spans 139-442; that stretch reads AERVDAARVE…GEGFIDRNKG (304 aa). 181–188 is an ATP binding site; that stretch reads GMGGVGKT. LRR repeat units follow at residues 512–533, 534–555, 558–580, 582–604, and 605–627; these read VARR…PESP, QLIT…FFRL, MLVV…ISEC, SLQY…VELR, and KLLY…SGLT.

This sequence belongs to the disease resistance NB-LRR family.

Its function is as follows. Probable disease resistance protein. The sequence is that of Probable disease resistance protein At5g63020 from Arabidopsis thaliana (Mouse-ear cress).